The sequence spans 208 residues: Negative modulator of initiation of replication (208 aa).

The interval 115 to 116 (AV) is interaction with DNA.

It belongs to the SeqA family. As to quaternary structure, homodimer. Polymerizes to form helical filaments.

It is found in the cytoplasm. In terms of biological role, negative regulator of replication initiation, which contributes to regulation of DNA replication and ensures that replication initiation occurs exactly once per chromosome per cell cycle. Binds to pairs of hemimethylated GATC sequences in the oriC region, thus preventing assembly of replication proteins and re-initiation at newly replicated origins. Repression is relieved when the region becomes fully methylated. The polypeptide is Negative modulator of initiation of replication (Shewanella frigidimarina (strain NCIMB 400)).